Reading from the N-terminus, the 48-residue chain is uncharacterized protein (48 aa).

The protein localises to the mitochondrion. This is an uncharacterized protein from Emericella nidulans (Aspergillus nidulans).